A 256-amino-acid chain; its full sequence is Ribonuclease 3 (256 aa).

The 123-residue stretch at 3-125 (LDALQQRLGY…IFGAVFLDGG (123 aa)) folds into the RNase III domain. Glu38 contacts Mg(2+). Residue Asp42 is part of the active site. Mg(2+)-binding residues include Asp111 and Glu114. The active site involves Glu114. Residues 152–222 (DAKTLLQEYL…AKLALDEAHR (71 aa)) form the DRBM domain. A disordered region spans residues 226–256 (QLVKRSRAERTGKTRKQATPPDPQLSLRLKE).

It belongs to the ribonuclease III family. In terms of assembly, homodimer. Requires Mg(2+) as cofactor.

It localises to the cytoplasm. It catalyses the reaction Endonucleolytic cleavage to 5'-phosphomonoester.. Functionally, digests double-stranded RNA. Involved in the processing of primary rRNA transcript to yield the immediate precursors to the large and small rRNAs (23S and 16S). Processes some mRNAs, and tRNAs when they are encoded in the rRNA operon. Processes pre-crRNA and tracrRNA of type II CRISPR loci if present in the organism. This Ralstonia pickettii (strain 12J) protein is Ribonuclease 3.